We begin with the raw amino-acid sequence, 221 residues long: Histone H1-like protein HC2 (221 aa).

2 stretches are compositionally biased toward basic residues: residues 1-50 (MLGV…KTVA) and 59-70 (PVAKKATAKKAP). Residues 1–70 (MLGVQKKRST…AKKATAKKAP (70 aa)) are disordered.

Belongs to the histone H1/H5 family. HCT subfamily.

In terms of biological role, might have a role in establishing the nucleoid structure of elementary bodies. The chain is Histone H1-like protein HC2 (hctB) from Chlamydia trachomatis serovar L2 (strain ATCC VR-902B / DSM 19102 / 434/Bu).